A 126-amino-acid chain; its full sequence is Protein ApaG (126 aa).

The region spanning 2–126 (KQLESSIRIE…FRLAAPGLLH (125 aa)) is the ApaG domain.

In Shewanella loihica (strain ATCC BAA-1088 / PV-4), this protein is Protein ApaG.